A 676-amino-acid chain; its full sequence is DNA ligase (676 aa).

NAD(+)-binding positions include D34 to D38, S83 to L84, and E117. The N6-AMP-lysine intermediate role is filled by K119. Residues R140, E177, K285, and K309 each coordinate NAD(+). Zn(2+) is bound by residues C403, C406, C427, and C434. Positions N595–G676 constitute a BRCT domain.

It belongs to the NAD-dependent DNA ligase family. LigA subfamily. The cofactor is Mg(2+). It depends on Mn(2+) as a cofactor.

The catalysed reaction is NAD(+) + (deoxyribonucleotide)n-3'-hydroxyl + 5'-phospho-(deoxyribonucleotide)m = (deoxyribonucleotide)n+m + AMP + beta-nicotinamide D-nucleotide.. Functionally, DNA ligase that catalyzes the formation of phosphodiester linkages between 5'-phosphoryl and 3'-hydroxyl groups in double-stranded DNA using NAD as a coenzyme and as the energy source for the reaction. It is essential for DNA replication and repair of damaged DNA. This is DNA ligase from Pelagibacter ubique (strain HTCC1062).